The chain runs to 54 residues: MLSWAITFLIIAIVAAVLGFGGIAGTATGIAKILFVVFLVMFIASFFFGRRGRG.

Transmembrane regions (helical) follow at residues 4 to 24 and 29 to 49; these read WAIT…GGIA and GIAK…FFFG.

The protein belongs to the UPF0391 family.

It localises to the cell membrane. This Pseudomonas fluorescens (strain ATCC BAA-477 / NRRL B-23932 / Pf-5) protein is UPF0391 membrane protein PFL_0093.